The primary structure comprises 292 residues: Glycine--tRNA ligase alpha subunit (292 aa).

This sequence belongs to the class-II aminoacyl-tRNA synthetase family. Tetramer of two alpha and two beta subunits.

The protein resides in the cytoplasm. The enzyme catalyses tRNA(Gly) + glycine + ATP = glycyl-tRNA(Gly) + AMP + diphosphate. This chain is Glycine--tRNA ligase alpha subunit, found in Synechococcus sp. (strain ATCC 27144 / PCC 6301 / SAUG 1402/1) (Anacystis nidulans).